A 199-amino-acid chain; its full sequence is Recombination protein RecR (199 aa).

A C4-type zinc finger spans residues 57-72 (CQKCRTFTEQSLCPIC). In terms of domain architecture, Toprim spans 81–176 (DTLCVVETPA…AVSRIAHGVP (96 aa)).

This sequence belongs to the RecR family.

Its function is as follows. May play a role in DNA repair. It seems to be involved in an RecBC-independent recombinational process of DNA repair. It may act with RecF and RecO. This Shewanella amazonensis (strain ATCC BAA-1098 / SB2B) protein is Recombination protein RecR.